The following is a 1610-amino-acid chain: Protein TASOR (1610 aa).

The tract at residues 1 to 96 is disordered; the sequence is MATAAETEAP…PERPFRRSFQ (96 aa). At alanine 2 the chain carries N-acetylalanine. The span at 41-51 shows a compositional bias: gly residues; sequence NGGGDGGGGAG. Low complexity predominate over residues 52 to 61; that stretch reads PEETAAAEAA. Serine 339 bears the Phosphoserine mark. Residue lysine 581 forms a Glycyl lysine isopeptide (Lys-Gly) (interchain with G-Cter in SUMO2) linkage. Phosphoserine is present on residues serine 628, serine 631, and serine 668. 2 disordered regions span residues 631–671 and 687–710; these read SDYE…SLDY and KKNV…RKLE. Composition is skewed to basic and acidic residues over residues 652–671 and 697–710; these read NSRD…SLDY and EDTK…RKLE. The residue at position 793 (serine 793) is a Phosphoserine. Residues lysine 816 and lysine 825 each participate in a glycyl lysine isopeptide (Lys-Gly) (interchain with G-Cter in SUMO2) cross-link. A Phosphoserine modification is found at serine 836. Lysine 866 participates in a covalent cross-link: Glycyl lysine isopeptide (Lys-Gly) (interchain with G-Cter in SUMO2). The tract at residues 915 to 941 is disordered; sequence TGGNAGSPEDQHGKHGEKQTPDTLKGT. Phosphoserine occurs at positions 921 and 928. The segment covering 923–934 has biased composition (basic and acidic residues); sequence EDQHGKHGEKQT. Phosphothreonine is present on threonine 1004. Residues serine 1059 and serine 1508 each carry the phosphoserine modification.

Belongs to the TASOR family. As to quaternary structure, component of the HUSH complex; at least composed of TASOR, PPHLN1 and MPHOSPH8. Interacts with MORC2; the interaction associateS MORC2 with the HUSH complex which recruits MORC2 to heterochromatic loci. Interacts with ZNF638; leading to recruitment of the HUSH complex to unintegrated retroviral DNA. Interacts with INPP5A, EML1, SV1L, GPSM2, ITGB3BP, CNTN1, ETFA, PSMD8, S100A10, MPHOSPH8, TMEM100, ALB, PARPBP, HCFC2, NCBP1 and SETDB1. As to expression, present in skin, brain and testis (at protein level). Ubiquitously expressed at low levels in the majority of the organs, expressed at higher levels in kidneys, spleen, thymus, seminal vesicles, uterus, and ovaries and its expression is almost six times higher in male tissues than in females. Highly expressed in seminiferous tubules with a strong signal in Sertoli cells, spermatogonia, and spermatocytes.

It localises to the nucleus. The protein localises to the chromosome. Functionally, component of the HUSH complex, a multiprotein complex that mediates epigenetic repression. The HUSH complex is recruited to genomic loci rich in H3K9me3 and is required to maintain transcriptional silencing by promoting recruitment of SETDB1, a histone methyltransferase that mediates further deposition of H3K9me3, as well as MORC2. Also represses L1 retrotransposons in collaboration with MORC2 and, probably, SETDB1, the silencing is dependent of repressive epigenetic modifications, such as H3K9me3 mark. Silencing events often occur within introns of transcriptionally active genes, and lead to the down-regulation of host gene expression. The HUSH complex is also involved in the silencing of unintegrated retroviral DNA by being recruited by ZNF638: some part of the retroviral DNA formed immediately after infection remains unintegrated in the host genome and is transcriptionally repressed. Plays a crucial role in early embryonic development. Involved in the organization of spindle poles and spindle apparatus assembly during zygotic division. Plays an important role in maintaining epiblast fitness or potency. In Mus musculus (Mouse), this protein is Protein TASOR.